We begin with the raw amino-acid sequence, 141 residues long: Hemoglobin subunit alpha (141 aa).

Positions 1–141 constitute a Globin domain; that stretch reads VLSPDDKKHV…VSTVLTSKYR (141 aa). Ser3 carries the phosphoserine modification. 2 positions are modified to N6-succinyllysine: Lys7 and Lys11. Lys16 carries the N6-acetyllysine; alternate modification. Lys16 carries the N6-succinyllysine; alternate modification. Position 24 is a phosphotyrosine (Tyr24). Position 35 is a phosphoserine (Ser35). Position 40 is an N6-succinyllysine (Lys40). Ser49 bears the Phosphoserine mark. Residue His58 coordinates O2. His87 is a heme b binding site. Position 102 is a phosphoserine (Ser102). Thr108 carries the phosphothreonine modification. A phosphoserine mark is found at Ser124 and Ser131. Phosphothreonine occurs at positions 134 and 137. Ser138 carries the post-translational modification Phosphoserine.

Belongs to the globin family. In terms of assembly, heterotetramer of two alpha chains and two beta chains. In terms of tissue distribution, red blood cells.

Involved in oxygen transport from the lung to the various peripheral tissues. In terms of biological role, hemopressin acts as an antagonist peptide of the cannabinoid receptor CNR1. Hemopressin-binding efficiently blocks cannabinoid receptor CNR1 and subsequent signaling. This chain is Hemoglobin subunit alpha (HBA), found in Theropithecus gelada (Gelada baboon).